Here is a 2130-residue protein sequence, read N- to C-terminus: COPII coat assembly protein SEC16 (2130 aa).

Composition is skewed to basic and acidic residues over residues 27 to 38 (KILEKEPEHEPS), 50 to 72 (DDVK…KDDL), and 88 to 97 (EAIKKNKLDP). Disordered regions lie at residues 27–516 (KILE…TQNK), 532–585 (FLED…NDAY), 598–647 (PAAR…ATMS), 810–842 (QGAQ…SSLI), 1347–1366 (DESK…SPAV), 1374–1519 (DITS…NNGS), 1558–1731 (PSIS…TPSD), 1753–1997 (DTET…LGEK), and 2014–2130 (IPLE…LDQK). Polar residues predominate over residues 98-120 (QDQTAAGDSGRSQPDLSPRTTTG). Composition is skewed to basic and acidic residues over residues 128–138 (ETKDTDGHDSA), 149–170 (DDNR…KSEL), 178–188 (EADKEETKDFD), and 199–216 (KAGK…EAKI). Polar residues-rich tracts occupy residues 267–279 (WESN…SSQA) and 293–335 (APSS…PSSQ). The span at 380-395 (DFLKEIQKQEESKDTD) shows a compositional bias: basic and acidic residues. Residues 405–420 (TPSAQPSSQDQDTSQD) are compositionally biased toward low complexity. Over residues 421–431 (MRNYSTTQTDI) the composition is skewed to polar residues. Basic and acidic residues-rich tracts occupy residues 447-481 (PKGE…HDFL) and 504-513 (ENKDSDKFET). Residues 538–568 (TSQTQTLKSKSNKQTYLPSTTNPSTTPVVPT) show a composition bias toward low complexity. The segment covering 601 to 617 (RSTNKYAPGSSNHNSPP) has biased composition (polar residues). 5 stretches are compositionally biased toward polar residues: residues 1374-1388 (DITS…TSPQ), 1399-1420 (VTTN…NGMS), 1428-1498 (LYSN…QSEN), 1505-1519 (YSAN…NNGS), and 1559-1574 (SISN…SNPI). The segment covering 1627–1640 (TESRESEKSSELRD) has biased composition (basic and acidic residues). Polar residues-rich tracts occupy residues 1701–1714 (SGGN…SSDK) and 1722–1731 (TSMLVDTPSD). Basic and acidic residues predominate over residues 1753–1779 (DTETLHDRNEVKEAPNQESIDTKEEAS). Polar residues-rich tracts occupy residues 1793 to 1803 (ASTSQSRNINV) and 1819 to 1839 (TSSL…NSFR). Residues 1840-1857 (TNEKESMFHPYQEGENKS) show a composition bias toward basic and acidic residues. Positions 1896-1911 (SSRLSQSQQSALYQQY) are enriched in low complexity. Acidic residues predominate over residues 1925-1935 (VDEEEDEDSED). Composition is skewed to basic and acidic residues over residues 1936–1963 (ESSK…KQRQ) and 1981–1997 (RKND…LGEK). 3 stretches are compositionally biased toward low complexity: residues 2039-2050 (SSSSISKPSSSS), 2061-2083 (APPA…RPSQ), and 2092-2104 (PSLA…DLLS).

The protein belongs to the SEC16 family.

Its subcellular location is the endoplasmic reticulum membrane. Functionally, involved in the initiation of assembly of the COPII coat required for the formation of transport vesicles from the endoplasmic reticulum (ER) and the selection of cargo molecules. Also involved in autophagy. This chain is COPII coat assembly protein SEC16 (SEC16), found in Debaryomyces hansenii (strain ATCC 36239 / CBS 767 / BCRC 21394 / JCM 1990 / NBRC 0083 / IGC 2968) (Yeast).